The chain runs to 176 residues: MSKALDRIRIHTGDITKLDVDAIVNAANTLLLGGGGVDGAIHRAAGRELEVECRMLNGCKVGDAKITKGYKLPARHIIHTVGPVWQGGGKGEAELLASCYRSSLELAAANDCRSVAFPAISTGVYRYPKDEATGIAVGTVSMVIEEKAMPETVIFCCFDEQTAQLYLRAVAALRKG.

One can recognise a Macro domain in the interval 1–174 (MSKALDRIRI…LYLRAVAALR (174 aa)).

It belongs to the MacroD-type family.

The sequence is that of Macro domain-containing protein mll7730 from Mesorhizobium japonicum (strain LMG 29417 / CECT 9101 / MAFF 303099) (Mesorhizobium loti (strain MAFF 303099)).